The following is a 226-amino-acid chain: uncharacterized protein (226 aa).

The N-terminal stretch at 1–18 (MRRIGLCISLLVTVLVMS) is a signal peptide.

This is an uncharacterized protein from Bacillus subtilis (strain 168).